The sequence spans 402 residues: Oxysterol-binding protein 8 (402 aa).

Residues aspartate 328–glutamate 361 are a coiled coil.

The protein belongs to the OSBP family.

The chain is Oxysterol-binding protein 8 (osbH) from Dictyostelium discoideum (Social amoeba).